Here is a 280-residue protein sequence, read N- to C-terminus: MTLQPFDGFGLGLRPPHYRAFLDSERPLVDFVEVISENFMVGGGRPLHVIDAVRERYPVALHGVSMSVGSADGVKLDYLRRLKGLADRVDPMWVSDHLCWTGVEGFNSHDLLPVPYTEEAMAVVCANIALAQDVLERPLLLENPSSYVTFANDAMAEHQFLAEMCARTGCYLLLDINNIYVSASNHGFDPYEYLAAVPVDRVLQIHLAGHSQGRELLIDTHDQPVPDSVWALYEAAAGRFGPVAAMIERDDDIPPLDDLLAELDVARARWAAGRRGSLAA.

This sequence belongs to the UPF0276 family.

The polypeptide is UPF0276 protein CC_2906 (Caulobacter vibrioides (strain ATCC 19089 / CIP 103742 / CB 15) (Caulobacter crescentus)).